The chain runs to 688 residues: Translation initiation factor IF-2 (688 aa).

Basic and acidic residues-rich tracts occupy residues 53–62 and 86–95; these read GKEKSEKTKE and KRDDKNEKVN. Positions 53 to 100 are disordered; the sequence is GKEKSEKTKEEDDEIETTAKNPIKESMNNKKSNKRDDKNEKVNTENAE. Residues 187 to 354 enclose the tr-type G domain; that stretch reads KRSPIITVMG…MILLSSEILE (168 aa). Residues 196-203 are G1; it reads GHVDHGKT. Residue 196-203 participates in GTP binding; it reads GHVDHGKT. The G2 stretch occupies residues 221–225; that stretch reads GITQH. The segment at 242 to 245 is G3; the sequence is DTPG. Residues 242–246 and 296–299 contribute to the GTP site; these read DTPGH and NKID. The G4 stretch occupies residues 296–299; the sequence is NKID. Residues 332 to 334 form a G5 region; the sequence is SAH.

It belongs to the TRAFAC class translation factor GTPase superfamily. Classic translation factor GTPase family. IF-2 subfamily.

The protein resides in the cytoplasm. Its function is as follows. One of the essential components for the initiation of protein synthesis. Protects formylmethionyl-tRNA from spontaneous hydrolysis and promotes its binding to the 30S ribosomal subunits. Also involved in the hydrolysis of GTP during the formation of the 70S ribosomal complex. In Clostridium botulinum (strain Kyoto / Type A2), this protein is Translation initiation factor IF-2.